Consider the following 1237-residue polypeptide: ATP-dependent RNA helicase DEAH13 (1237 aa).

Disordered regions lie at residues 1 to 51 and 115 to 148; these read MASV…NSNV and AMQL…EPTT. A compositionally biased stretch (polar residues) spans 24 to 38; it reads SNKMQDKLNSNNNTG. Residues 131–143 show a composition bias toward acidic residues; it reads SVEQNDNDDDSCM. Residues 251–443 form the Helicase ATP-binding domain; it reads MEAINRHPAV…KRLFPNIPPL (193 aa). 264 to 271 is an ATP binding site; it reads GQTGCGKT. Positions 367–370 match the DEAH box motif; sequence DEAH. Residues 543 to 585 form a disordered region; sequence DDDSNNQNSRFSSHGEDPSDIGDGNYDDDFEEEDMYESDEDRD. Residues 567 to 585 show a composition bias toward acidic residues; the sequence is NYDDDFEEEDMYESDEDRD. One can recognise a Helicase C-terminal domain in the interval 605 to 776; sequence ALRAAFNALA…GVILLMKSMN (172 aa). The tract at residues 876–910 is disordered; it reads EKKNESKDADKTVKQEDKQRKKDRKEKIKAARDRF.

Belongs to the DEAD box helicase family. DEAH subfamily.

It carries out the reaction ATP + H2O = ADP + phosphate + H(+). This Arabidopsis thaliana (Mouse-ear cress) protein is ATP-dependent RNA helicase DEAH13.